The following is a 353-amino-acid chain: MKNDPLRILVAEDSPTARRLLVEIVRADPALTVVGEARDGVEAVELAQRLRPSLVTMDIQMPRMDGLEATRRIMTEVPTPVVVVSTLVERDIQTSMAALRAGALAVLQKPLGPESPDFDADSRRLRDTLKAMAEVKVVRRWPDRTAPPAPVPTPPAPPVSPTRPGVVALAASTGGPAALFRLLSELPASFPVPLLVVQHIAIGFSEGLAQWLRTAGPLPVKVAEDGEPLLPGHVYLAPDDRHLGVRGEGRAEVSRAAPVNGFRPSATWMFRSVARAYGPASLAVILTGMGQDGLEGVRELHGAGGRILAQDEQSSVVYGMPGVVVGANLAHEVVALPDLASRLTSAFRGSGGV.

Residues 7 to 124 (RILVAEDSPT…SPDFDADSRR (118 aa)) form the Response regulatory domain. D58 carries the post-translational modification 4-aspartylphosphate. The region spanning 158-350 (PVSPTRPGVV…SRLTSAFRGS (193 aa)) is the CheB-type methylesterase domain. Catalysis depends on residues S172, H199, and D292.

Belongs to the CheB family. Post-translationally, phosphorylated by CheA. Phosphorylation of the N-terminal regulatory domain activates the methylesterase activity.

Its subcellular location is the cytoplasm. The catalysed reaction is [protein]-L-glutamate 5-O-methyl ester + H2O = L-glutamyl-[protein] + methanol + H(+). The enzyme catalyses L-glutaminyl-[protein] + H2O = L-glutamyl-[protein] + NH4(+). In terms of biological role, involved in chemotaxis. Part of a chemotaxis signal transduction system that modulates chemotaxis in response to various stimuli. Catalyzes the demethylation of specific methylglutamate residues introduced into the chemoreceptors (methyl-accepting chemotaxis proteins or MCP) by CheR. Also mediates the irreversible deamidation of specific glutamine residues to glutamic acid. This chain is Protein-glutamate methylesterase/protein-glutamine glutaminase 4, found in Myxococcus xanthus (strain DK1622).